The chain runs to 217 residues: Probable nicotinate-nucleotide adenylyltransferase (217 aa).

Belongs to the NadD family.

It catalyses the reaction nicotinate beta-D-ribonucleotide + ATP + H(+) = deamido-NAD(+) + diphosphate. Its pathway is cofactor biosynthesis; NAD(+) biosynthesis; deamido-NAD(+) from nicotinate D-ribonucleotide: step 1/1. In terms of biological role, catalyzes the reversible adenylation of nicotinate mononucleotide (NaMN) to nicotinic acid adenine dinucleotide (NaAD). The polypeptide is Probable nicotinate-nucleotide adenylyltransferase (Dechloromonas aromatica (strain RCB)).